Here is a 1560-residue protein sequence, read N- to C-terminus: Lysine-specific demethylase 5C (1560 aa).

The JmjN domain maps to 14-55 (CPVFEPSWAEFRDPLGYIAKIRPIAEKSGICKIRPPADWQPP). Residues 79–169 (TRVKLNYLDQ…IVYPYEMYQS (91 aa)) enclose the ARID domain. The span at 197-207 (LRQSVQPSKFN) shows a compositional bias: polar residues. The segment at 197 to 227 (LRQSVQPSKFNSYGRRAKRLQPDPEPTEEDI) is disordered. Residues lysine 205, lysine 229, lysine 244, and lysine 274 each participate in a glycyl lysine isopeptide (Lys-Gly) (interchain with G-Cter in SUMO2) cross-link. Serine 287 bears the Phosphoserine mark. Lysine 295 participates in a covalent cross-link: Glycyl lysine isopeptide (Lys-Gly) (interchain with G-Cter in SUMO2). A phosphoserine mark is found at serine 301 and serine 317. A PHD-type 1 zinc finger spans residues 326 to 372 (VCRMCSRGDEDDKLLLCDGCDDNYHIFCLLPPLPEIPKGVWRCPKCV). A 2-oxoglutarate-binding site is contributed by tyrosine 440. Residues 468–634 (EYATSGWNLN…AGRQCIEHYR (167 aa)) form the JmjC domain. Positions 514 and 516 each coordinate Fe cation. Serine 522, asparagine 524, and lysine 532 together coordinate 2-oxoglutarate. Histidine 602 is a Fe cation binding site. The C5HC2 zinc-finger motif lies at 707-759 (CIKCKTTCFLSALACYDCPDGLVCLSHINDLCKCSSSRQYLRYRYTLDELPAM). Phosphoserine occurs at positions 893 and 897. A Glycyl lysine isopeptide (Lys-Gly) (interchain with G-Cter in SUMO2) cross-link involves residue lysine 1127. Positions 1161–1181 (ILQLRRTNSAKPSPLASSSTA) are disordered. A compositionally biased stretch (low complexity) spans 1169 to 1181 (SAKPSPLASSSTA). The PHD-type 2 zinc finger occupies 1187–1248 (ICVCGQVLAG…DTKFLCPLCM (62 aa)). Disordered regions lie at residues 1316-1371 (QAEP…GSGK) and 1444-1560 (ERHG…QQQL). Basic and acidic residues predominate over residues 1335–1345 (PLREGSGKDMP). A Phosphoserine modification is found at serine 1359. A compositionally biased stretch (basic residues) spans 1448-1463 (SRARGRALERRRRRKV). Basic and acidic residues predominate over residues 1464-1481 (DRGGEGDDPAREELEPKR). Residues 1488–1503 (EAEEVQEEEELEEETG) are compositionally biased toward acidic residues. Over residues 1516 to 1544 (SPSTQENQNGLEPAEGTTSGPSAPFSTLT) the composition is skewed to polar residues.

The protein belongs to the JARID1 histone demethylase family. As to quaternary structure, part of two distinct complexes, one containing E2F6, and the other containing REST. Interacts with ZMYND8. Fe(2+) is required as a cofactor. As to expression, expressed in all tissues examined. Highest levels found in brain and skeletal muscle.

The protein localises to the nucleus. The enzyme catalyses N(6),N(6),N(6)-trimethyl-L-lysyl(4)-[histone H3] + 3 2-oxoglutarate + 3 O2 = L-lysyl(4)-[histone H3] + 3 formaldehyde + 3 succinate + 3 CO2. With respect to regulation, the inhibitor KDOAM-25 and others inhibit its demethylase activity, resulting to cell cycle arrest in myeloma cells. Its function is as follows. Histone demethylase that specifically demethylates 'Lys-4' of histone H3, thereby playing a central role in histone code. Does not demethylate histone H3 'Lys-9', H3 'Lys-27', H3 'Lys-36', H3 'Lys-79' or H4 'Lys-20'. Demethylates trimethylated and dimethylated but not monomethylated H3 'Lys-4'. Participates in transcriptional repression of neuronal genes by recruiting histone deacetylases and REST at neuron-restrictive silencer elements. Represses the CLOCK-BMAL1 heterodimer-mediated transcriptional activation of the core clock component PER2. This chain is Lysine-specific demethylase 5C, found in Homo sapiens (Human).